The following is a 262-amino-acid chain: tRNA pseudouridine synthase A (262 aa).

The Nucleophile role is filled by Asp54. Tyr113 provides a ligand contact to substrate.

This sequence belongs to the tRNA pseudouridine synthase TruA family. In terms of assembly, homodimer.

The enzyme catalyses uridine(38/39/40) in tRNA = pseudouridine(38/39/40) in tRNA. Formation of pseudouridine at positions 38, 39 and 40 in the anticodon stem and loop of transfer RNAs. The polypeptide is tRNA pseudouridine synthase A (Lactobacillus acidophilus (strain ATCC 700396 / NCK56 / N2 / NCFM)).